A 264-amino-acid chain; its full sequence is Ribosomal RNA small subunit methyltransferase A (264 aa).

Residues Asn12, Leu14, Gly40, Glu61, Asp86, and Asn105 each coordinate S-adenosyl-L-methionine.

It belongs to the class I-like SAM-binding methyltransferase superfamily. rRNA adenine N(6)-methyltransferase family. RsmA subfamily.

It localises to the cytoplasm. It catalyses the reaction adenosine(1518)/adenosine(1519) in 16S rRNA + 4 S-adenosyl-L-methionine = N(6)-dimethyladenosine(1518)/N(6)-dimethyladenosine(1519) in 16S rRNA + 4 S-adenosyl-L-homocysteine + 4 H(+). In terms of biological role, specifically dimethylates two adjacent adenosines (A1518 and A1519) in the loop of a conserved hairpin near the 3'-end of 16S rRNA in the 30S particle. May play a critical role in biogenesis of 30S subunits. This is Ribosomal RNA small subunit methyltransferase A from Fusobacterium nucleatum subsp. nucleatum (strain ATCC 25586 / DSM 15643 / BCRC 10681 / CIP 101130 / JCM 8532 / KCTC 2640 / LMG 13131 / VPI 4355).